The primary structure comprises 351 residues: Mannonate dehydratase (351 aa).

This sequence belongs to the mannonate dehydratase family. Fe(2+) serves as cofactor. The cofactor is Mn(2+).

It carries out the reaction D-mannonate = 2-dehydro-3-deoxy-D-gluconate + H2O. It participates in carbohydrate metabolism; pentose and glucuronate interconversion. Its function is as follows. Catalyzes the dehydration of D-mannonate. The protein is Mannonate dehydratase of Clostridium acetobutylicum (strain ATCC 824 / DSM 792 / JCM 1419 / IAM 19013 / LMG 5710 / NBRC 13948 / NRRL B-527 / VKM B-1787 / 2291 / W).